A 318-amino-acid chain; its full sequence is Ubiquitin-like domain-containing CTD phosphatase 1 (318 aa).

Positions 3–81 constitute a Ubiquitin-like domain; sequence LPIIVKWGGQ…IMMMGTREES (79 aa). Position 117 is an N6-acetyllysine (K117). In terms of domain architecture, FCP1 homology spans 133-294; that stretch reads PREGKKLLVL…VKLTQYLKEI (162 aa). Mg(2+)-binding residues include D143, D145, and D253.

Requires Mg(2+) as cofactor.

The protein localises to the nucleus. It catalyses the reaction O-phospho-L-seryl-[protein] + H2O = L-seryl-[protein] + phosphate. It carries out the reaction O-phospho-L-threonyl-[protein] + H2O = L-threonyl-[protein] + phosphate. Its function is as follows. Dephosphorylates 26S nuclear proteasomes, thereby decreasing their proteolytic activity. Recruited to the 19S regulatory particle of the 26S proteasome through its interaction with 19S component PSMD2/RPN1. Once recruited, dephosphorylates 19S component PSMC2/RPT1 which impairs PSMC2 ATPase activity and disrupts 26S proteasome assembly. Has also been reported to stimulate the proteolytic activity of the 26S proteasome. The polypeptide is Ubiquitin-like domain-containing CTD phosphatase 1 (Ublcp1) (Rattus norvegicus (Rat)).